The chain runs to 329 residues: Glycerol-3-phosphate dehydrogenase [NAD(P)+] (329 aa).

W11, R31, and K105 together coordinate NADPH. Positions 105, 135, and 137 each coordinate sn-glycerol 3-phosphate. Residue A139 participates in NADPH binding. Positions 190, 243, 253, 254, and 255 each coordinate sn-glycerol 3-phosphate. K190 functions as the Proton acceptor in the catalytic mechanism. R254 contributes to the NADPH binding site. Positions 277 and 279 each coordinate NADPH.

Belongs to the NAD-dependent glycerol-3-phosphate dehydrogenase family.

The protein localises to the cytoplasm. The enzyme catalyses sn-glycerol 3-phosphate + NAD(+) = dihydroxyacetone phosphate + NADH + H(+). The catalysed reaction is sn-glycerol 3-phosphate + NADP(+) = dihydroxyacetone phosphate + NADPH + H(+). It participates in membrane lipid metabolism; glycerophospholipid metabolism. Catalyzes the reduction of the glycolytic intermediate dihydroxyacetone phosphate (DHAP) to sn-glycerol 3-phosphate (G3P), the key precursor for phospholipid synthesis. This is Glycerol-3-phosphate dehydrogenase [NAD(P)+] from Maridesulfovibrio salexigens (strain ATCC 14822 / DSM 2638 / NCIMB 8403 / VKM B-1763) (Desulfovibrio salexigens).